The sequence spans 871 residues: Protein arg-6, mitochondrial (871 aa).

The N-terminal 44 residues, 1–44 (MYSACAVALRAGARRVVRRVPKSARALPRAAAARRQISTTAARS), are a transit peptide targeting the mitochondrion. The region spanning 336–488 (QASTSLSEFK…DFTENGRAML (153 aa)) is the N-acetyltransferase domain. The active site involves C689.

This sequence in the N-terminal section; belongs to the acetylglutamate kinase family. It in the C-terminal section; belongs to the NAGSA dehydrogenase family. In terms of processing, the protein precursor is cleaved into the two biologically active enzymes, the kinase and the reductase.

It is found in the mitochondrion. It catalyses the reaction N-acetyl-L-glutamate 5-semialdehyde + phosphate + NADP(+) = N-acetyl-L-glutamyl 5-phosphate + NADPH + H(+). The catalysed reaction is N-acetyl-L-glutamate + ATP = N-acetyl-L-glutamyl 5-phosphate + ADP. It functions in the pathway amino-acid biosynthesis; L-arginine biosynthesis; N(2)-acetyl-L-ornithine from L-glutamate: step 2/4. Its pathway is amino-acid biosynthesis; L-arginine biosynthesis; N(2)-acetyl-L-ornithine from L-glutamate: step 3/4. The chain is Protein arg-6, mitochondrial (arg-6) from Neurospora crassa (strain ATCC 24698 / 74-OR23-1A / CBS 708.71 / DSM 1257 / FGSC 987).